A 500-amino-acid chain; its full sequence is Guanosine-5'-triphosphate,3'-diphosphate pyrophosphatase (500 aa).

It belongs to the GppA/Ppx family. GppA subfamily.

The catalysed reaction is guanosine 3'-diphosphate 5'-triphosphate + H2O = guanosine 3',5'-bis(diphosphate) + phosphate + H(+). It functions in the pathway purine metabolism; ppGpp biosynthesis; ppGpp from GTP: step 2/2. Functionally, catalyzes the conversion of pppGpp to ppGpp. Guanosine pentaphosphate (pppGpp) is a cytoplasmic signaling molecule which together with ppGpp controls the 'stringent response', an adaptive process that allows bacteria to respond to amino acid starvation, resulting in the coordinated regulation of numerous cellular activities. The chain is Guanosine-5'-triphosphate,3'-diphosphate pyrophosphatase from Photorhabdus laumondii subsp. laumondii (strain DSM 15139 / CIP 105565 / TT01) (Photorhabdus luminescens subsp. laumondii).